We begin with the raw amino-acid sequence, 733 residues long: Zinc finger transcription factor ace1 (733 aa).

Residues 1-11 (MSFSNPRRRTP) show a composition bias toward basic residues. Disordered stretches follow at residues 1 to 22 (MSFS…CEHG), 34 to 63 (GATF…SQSA), and 89 to 183 (ASLS…SSTT). The segment covering 39–49 (SPTSPSASSAA) has biased composition (low complexity). Residues 132 to 142 (LRPRSVRRTRN) show a composition bias toward basic residues. Polar residues predominate over residues 148 to 158 (GIGSSVVSTND). Over residues 171–183 (ASALTRSAASSTT) the composition is skewed to low complexity. C2H2-type zinc fingers lie at residues 400 to 424 (KKCR…EKTH), 428 to 456 (WKCP…NDKH), and 463 to 488 (YECL…EKAH). The segment at 497 to 533 (TNGKKAPSQNGSTAQQTPPLANVSTPSSTPSYSVPTP) is disordered. Over residues 503-515 (PSQNGSTAQQTPP) the composition is skewed to polar residues. Residues 519-530 (VSTPSSTPSYSV) are compositionally biased toward low complexity.

It localises to the nucleus. Functionally, binds to the promoter of the cbh1 gene and activates transcription. The sequence is that of Zinc finger transcription factor ace1 (ace1) from Hypocrea jecorina (Trichoderma reesei).